The following is a 121-amino-acid chain: Non-structural protein 3a (121 aa).

The N-terminal stretch at Met-1–Ser-39 is a signal peptide.

In Bat coronavirus HKU5 (BtCoV), this protein is Non-structural protein 3a.